A 252-amino-acid chain; its full sequence is Maintenance of carboxysome distribution protein A (252 aa).

Residues G11, G12, G14, K15, T16, T17, Q41, E147, K151, F182, R183, L216, E217, and S218 each coordinate ATP. T16 contributes to the Mg(2+) binding site.

Belongs to the ParA family. McdA subfamily. In terms of assembly, self-associates (probably a homodimer), interacts with McdB probably via the C-terminus of both proteins. Shows no signs of filament formation. Homodimerizes in the presence of ATP, making extra nucleotide contacts than with ADP or AMP-PNP. Each subunit binds 1 ATP molecule; Glu-147, Lys-151 and Arg-183 cross the dimer interface to contact ATP in the other subunit, while Phe-182, Arg-183 and Phe-221 stack with the adenine base in their own subunit.

Its subcellular location is the cytoplasm. It is found in the nucleoid. The enzyme catalyses ATP + H2O = ADP + phosphate + H(+). Functionally, mcdA and McdB together mediate carboxysome (Cb) spacing, size, ultrastructure and probably inheritance in the cell. Together they prevent Cb aggregation. McdA is an ATPase that forms dynamic gradients on the nucleoid in response to adapter protein McdB, which associates with carboxysomes. The interplay between McdA gradients on the nucleoid and McdB-bound carboxysomes result in the equal spacing of Cbs along the cell length. Binds nucleoid DNA in an ATP-dependent manner; neither ADP nor ATP-gamma-S support DNA binding. Upon ATP-binding dimerizes and binds nucleoid DNA; the (McdA-ATP)2 dimer transiently binds McdB-bound Cbs. McdA's ATPase activity is stimulated 2-fold by DNA and McdB; ATP hydrolysis causes McdA release from DNA. Overexpression leads to loss of McdA oscillation, diffuse nucleoid staining by McdA with formation of large carboxysome aggregates that are in regions depleted of McdA; McdA remains nucleoid-associated. Its function is as follows. Mutagenesis studies (characterized in vivo) suggest ATP binding, protein dimerization and a conformational change are necessary for nucleoid DNA-binding and binding to McdB-bound Cbs, which tethers Cbs to the nucleoid. Eventual McdB-stimulated ATP hydrolysis causes de-dimerization of McdA which no longer binds the nucleoid and releases McdB and Cbs. McdB-bound Cbs then move to a region of higher McdA concentration, distributing Cbs across the nucleoid. Incorrect positioning (aggregation) of carboxysomes results in reduced CO(2) fixation by encapsulated ribulose-1,5-bisphosphate carboxylase (RuBisCO, cbbL/cbbS), which leads to slower growth, cell elongation, asymmetric cell division and an increase in RuBisCO levels. The polypeptide is Maintenance of carboxysome distribution protein A (Synechococcus elongatus (strain ATCC 33912 / PCC 7942 / FACHB-805) (Anacystis nidulans R2)).